A 475-amino-acid polypeptide reads, in one-letter code: Ribulose bisphosphate carboxylase large chain (475 aa).

The propeptide occupies 1 to 2 (MS). Pro-3 carries the N-acetylproline modification. Lys-14 bears the N6,N6,N6-trimethyllysine mark. Residues Asn-123 and Thr-173 each coordinate substrate. Lys-175 functions as the Proton acceptor in the catalytic mechanism. Lys-177 serves as a coordination point for substrate. Lys-201, Asp-203, and Glu-204 together coordinate Mg(2+). At Lys-201 the chain carries N6-carboxylysine. His-294 (proton acceptor) is an active-site residue. Substrate contacts are provided by Arg-295, His-327, and Ser-379.

It belongs to the RuBisCO large chain family. Type I subfamily. Heterohexadecamer of 8 large chains and 8 small chains; disulfide-linked. The disulfide link is formed within the large subunit homodimers. Mg(2+) serves as cofactor. The disulfide bond which can form in the large chain dimeric partners within the hexadecamer appears to be associated with oxidative stress and protein turnover.

Its subcellular location is the plastid. It is found in the chloroplast. It catalyses the reaction 2 (2R)-3-phosphoglycerate + 2 H(+) = D-ribulose 1,5-bisphosphate + CO2 + H2O. It carries out the reaction D-ribulose 1,5-bisphosphate + O2 = 2-phosphoglycolate + (2R)-3-phosphoglycerate + 2 H(+). RuBisCO catalyzes two reactions: the carboxylation of D-ribulose 1,5-bisphosphate, the primary event in carbon dioxide fixation, as well as the oxidative fragmentation of the pentose substrate in the photorespiration process. Both reactions occur simultaneously and in competition at the same active site. The protein is Ribulose bisphosphate carboxylase large chain of Equisetum arvense (Field horsetail).